The following is a 127-amino-acid chain: UPF0389 protein GA21628 (127 aa).

A helical transmembrane segment spans residues 69–88; sequence IRLANIMIALTVIGCGIMVY.

It belongs to the UPF0389 family.

It is found in the membrane. The protein is UPF0389 protein GA21628 of Drosophila pseudoobscura pseudoobscura (Fruit fly).